Reading from the N-terminus, the 567-residue chain is Proline--tRNA ligase (567 aa).

The protein belongs to the class-II aminoacyl-tRNA synthetase family. ProS type 1 subfamily. As to quaternary structure, homodimer.

It localises to the cytoplasm. It carries out the reaction tRNA(Pro) + L-proline + ATP = L-prolyl-tRNA(Pro) + AMP + diphosphate. Its function is as follows. Catalyzes the attachment of proline to tRNA(Pro) in a two-step reaction: proline is first activated by ATP to form Pro-AMP and then transferred to the acceptor end of tRNA(Pro). As ProRS can inadvertently accommodate and process non-cognate amino acids such as alanine and cysteine, to avoid such errors it has two additional distinct editing activities against alanine. One activity is designated as 'pretransfer' editing and involves the tRNA(Pro)-independent hydrolysis of activated Ala-AMP. The other activity is designated 'posttransfer' editing and involves deacylation of mischarged Ala-tRNA(Pro). The misacylated Cys-tRNA(Pro) is not edited by ProRS. In Staphylococcus epidermidis (strain ATCC 35984 / DSM 28319 / BCRC 17069 / CCUG 31568 / BM 3577 / RP62A), this protein is Proline--tRNA ligase.